Consider the following 75-residue polypeptide: Alpha-elapitoxin-Bc2b (75 aa).

The first 2 residues, 1 to 2, serve as a signal peptide directing secretion; that stretch reads YT. 5 disulfides stabilise this stretch: cysteine 5–cysteine 24, cysteine 17–cysteine 45, cysteine 30–cysteine 34, cysteine 49–cysteine 60, and cysteine 61–cysteine 66.

As to quaternary structure, monomer in solution, homodimer in crystal state. As to expression, expressed by the venom gland.

The protein resides in the secreted. In terms of biological role, binds to muscular and neuronal nicotinic acetylcholine receptor (nAChR) and inhibits acetylcholine from binding to the receptor, thereby impairing neuromuscular and neuronal transmission. Blocks muscle type nAChR. Also binds with high affinity to alpha-7/CHRNA7 nAChRs. In addition, shows a weak inhibition of neuronal alpha-3-beta-2/CHRNA3-CHRNB2 nAChR. Selectively binds to alpha-1-delta subunit interface of the mouse muscle nicotinic acetylcholine receptor, with a 10-fold higher affinity for the adult than for the fetal receptors. In vivo, when intraperitoneally injected into mice, causes flaccid paralysis and respiratory distress, followed by death within 2-4 hours. In Bungarus candidus (Malayan krait), this protein is Alpha-elapitoxin-Bc2b.